We begin with the raw amino-acid sequence, 215 residues long: Formate dehydrogenase subunit beta (215 aa).

The 30-residue stretch at Lys3 to Pro32 folds into the 4Fe-4S ferredoxin-type 1 domain. [4Fe-4S] cluster-binding residues include Cys12, Cys15, Cys18, Cys22, Cys73, Cys76, Cys81, Cys121, Cys138, Cys141, Cys153, and Cys157. A 4Fe-4S ferredoxin-type 2 domain is found at Val129–Ser168.

In terms of assembly, heterodimer of alpha (FdhA) and beta (FdhB) subunits. Requires [4Fe-4S] cluster as cofactor.

Its subcellular location is the periplasm. Functionally, beta chain of the formate dehydrogenase (FDH) catalyzes the reversible two-electron oxidation of formate to carbon dioxide. FDH loses activity in the presence of air, but this activity can be restored. This chain is an electron transfer unit. This Megalodesulfovibrio gigas (strain ATCC 19364 / DSM 1382 / NCIMB 9332 / VKM B-1759) (Desulfovibrio gigas) protein is Formate dehydrogenase subunit beta.